The sequence spans 63 residues: Large ribosomal subunit protein uL29 (63 aa).

This sequence belongs to the universal ribosomal protein uL29 family.

This Mannheimia succiniciproducens (strain KCTC 0769BP / MBEL55E) protein is Large ribosomal subunit protein uL29.